Here is a 247-residue protein sequence, read N- to C-terminus: ATP synthase subunit a, chloroplastic (247 aa).

A run of 5 helical transmembrane segments spans residues 38 to 58 (QVLI…ALAV), 95 to 115 (VPFI…GALL), 134 to 154 (INTT…AGLA), 199 to 219 (LVVV…VMFL), and 220 to 240 (GLFT…AYIG).

Belongs to the ATPase A chain family. F-type ATPases have 2 components, CF(1) - the catalytic core - and CF(0) - the membrane proton channel. CF(1) has five subunits: alpha(3), beta(3), gamma(1), delta(1), epsilon(1). CF(0) has four main subunits: a, b, b' and c.

It localises to the plastid. Its subcellular location is the chloroplast thylakoid membrane. Its function is as follows. Key component of the proton channel; it plays a direct role in the translocation of protons across the membrane. This chain is ATP synthase subunit a, chloroplastic, found in Trachelium caeruleum (Blue throatwort).